A 173-amino-acid chain; its full sequence is Ribosome maturation factor RimM (173 aa).

Residues Glu-92–Ile-165 form the PRC barrel domain.

The protein belongs to the RimM family. In terms of assembly, binds ribosomal protein uS19.

Its subcellular location is the cytoplasm. Its function is as follows. An accessory protein needed during the final step in the assembly of 30S ribosomal subunit, possibly for assembly of the head region. Essential for efficient processing of 16S rRNA. May be needed both before and after RbfA during the maturation of 16S rRNA. It has affinity for free ribosomal 30S subunits but not for 70S ribosomes. The protein is Ribosome maturation factor RimM of Nitrobacter hamburgensis (strain DSM 10229 / NCIMB 13809 / X14).